The following is a 141-amino-acid chain: N,N-dimethylformamidase alpha subunit (141 aa).

Heterotetramer of two DmfA1 (alpha) and two DmfA2 (beta) subunits.

The catalysed reaction is N,N-dimethylformamide + H2O = dimethylamine + formate. In terms of biological role, hydrolyzes N,N-dimethylformamide, and to a lesser extent N,N-dimethylacetamide and N,N-diethylacetamide. Has no activity against the substituted amides N-methylformamide, N-ethylformamide, N-ethylformamide and N-methylacetamide or the unsubstituted amides formamide, nicotinamide, acetoamide, benzamide, acetamide and acrylamide. This Paracoccus aminophilus protein is N,N-dimethylformamidase alpha subunit.